The sequence spans 292 residues: Type II methyltransferase M.SmaI (292 aa).

Positions 110–130 are disordered; the sequence is WRDKDDKNKGRAMSYRPPTPE.

This sequence belongs to the N(4)/N(6)-methyltransferase family. N(4) subfamily.

The catalysed reaction is a 2'-deoxycytidine in DNA + S-adenosyl-L-methionine = an N(4)-methyl-2'-deoxycytidine in DNA + S-adenosyl-L-homocysteine + H(+). Functionally, a beta subtype methylase thatnrecognizes the double-stranded sequence 5'-CCCGGG-3', methylates C-2 on both strands, and protects the DNA from cleavage by the SmaI endonuclease. The polypeptide is Type II methyltransferase M.SmaI (smaIM) (Serratia marcescens).